The primary structure comprises 119 residues: Large ribosomal subunit protein uL18 (119 aa).

The protein belongs to the universal ribosomal protein uL18 family. Part of the 50S ribosomal subunit; part of the 5S rRNA/L5/L18/L25 subcomplex. Contacts the 5S and 23S rRNAs.

This is one of the proteins that bind and probably mediate the attachment of the 5S RNA into the large ribosomal subunit, where it forms part of the central protuberance. The polypeptide is Large ribosomal subunit protein uL18 (Tropheryma whipplei (strain TW08/27) (Whipple's bacillus)).